The sequence spans 299 residues: Arginase (299 aa).

Residues His-99, Asp-122, His-124, and Asp-126 each coordinate Mn(2+). Residues 124 to 128 (HGDVN), 135 to 137 (SGN), and Asp-178 each bind substrate. The Mn(2+) site is built by Asp-226 and Asp-228. Substrate-binding residues include Thr-240 and Glu-271.

It belongs to the arginase family. Homohexamer. Requires Mn(2+) as cofactor.

It carries out the reaction L-arginine + H2O = urea + L-ornithine. The protein operates within nitrogen metabolism; urea cycle; L-ornithine and urea from L-arginine: step 1/1. Its function is as follows. Controls arginine catabolism. The chain is Arginase (rocF) from Bacillus caldovelox.